The following is a 288-amino-acid chain: Probable sulfate transport system permease protein cysT (288 aa).

8 helical membrane passes run 2–22 (IPLF…KFRF), 28–48 (LVLA…IFFL), 77–97 (FLTA…LAWV), 112–132 (TVDL…MTVF), 149–169 (IVFN…PFVV), 196–218 (TTFW…TLGF), 227–247 (SIVL…VLLF), and 257–277 (SATI…FFIN). The region spanning 73–277 (YGFTFLTALL…ISFTALFFIN (205 aa)) is the ABC transmembrane type-1 domain.

It belongs to the binding-protein-dependent transport system permease family. CysTW subfamily.

The protein resides in the plastid. Its subcellular location is the chloroplast membrane. Functionally, part of the ABC transporter complex cysAWTP (TC 3.A.1.6.1) involved in sulfate/thiosulfate import. Probably responsible for the translocation of the substrate across the membrane. The polypeptide is Probable sulfate transport system permease protein cysT (cysT) (Marchantia polymorpha (Common liverwort)).